The chain runs to 233 residues: uncharacterized protein (233 aa).

Residues 190-233 (LNTSLSEDDTESIVETDYSEEEKESISETESSSDDESYSLYDSF) are disordered. The span at 195–212 (SEDDTESIVETDYSEEEK) shows a compositional bias: acidic residues.

Belongs to the asfivirus DP238L family.

This is an uncharacterized protein from Ornithodoros (relapsing fever ticks).